A 502-amino-acid polypeptide reads, in one-letter code: ATP synthase subunit alpha (502 aa).

Residues 115–136 (VDGLGPIHTTKTRPIESPAPGV) are disordered. 169–176 (GDRQTGKT) lines the ATP pocket.

This sequence belongs to the ATPase alpha/beta chains family. In terms of assembly, F-type ATPases have 2 components, CF(1) - the catalytic core - and CF(0) - the membrane proton channel. CF(1) has five subunits: alpha(3), beta(3), gamma(1), delta(1), epsilon(1). CF(0) has three main subunits: a(1), b(2) and c(9-12). The alpha and beta chains form an alternating ring which encloses part of the gamma chain. CF(1) is attached to CF(0) by a central stalk formed by the gamma and epsilon chains, while a peripheral stalk is formed by the delta and b chains.

It localises to the cell membrane. It catalyses the reaction ATP + H2O + 4 H(+)(in) = ADP + phosphate + 5 H(+)(out). Its function is as follows. Produces ATP from ADP in the presence of a proton gradient across the membrane. The alpha chain is a regulatory subunit. This chain is ATP synthase subunit alpha, found in Bacillus cytotoxicus (strain DSM 22905 / CIP 110041 / 391-98 / NVH 391-98).